A 209-amino-acid polypeptide reads, in one-letter code: Urease accessory protein UreE (209 aa).

The segment covering 170 to 196 (EHHGHSHSHSHDHDHDHDHDHDHDHQH) has biased composition (basic and acidic residues). The disordered stretch occupies residues 170-209 (EHHGHSHSHSHDHDHDHDHDHDHDHQHGPSCSHGHHHGHR).

The protein belongs to the UreE family.

It localises to the cytoplasm. In terms of biological role, involved in urease metallocenter assembly. Binds nickel. Probably functions as a nickel donor during metallocenter assembly. This is Urease accessory protein UreE from Burkholderia mallei (strain NCTC 10247).